The sequence spans 1602 residues: Calmodulin-regulated spectrin-associated protein 1 (1602 aa).

The Calponin-homology (CH) domain occupies 216-331 (ESPAHQKVRY…FIAELFWWFE (116 aa)). Phosphoserine is present on residues Ser217, Ser371, Ser375, Ser416, and Ser431. Residues 426–471 (QKQQKSIQGEDIPDQRHRSNSLTRVDGQPRGAAIAWPEKKTRPASQ) are disordered. Thr512 carries the post-translational modification Phosphothreonine. Residues Ser563, Ser575, and Ser589 each carry the phosphoserine modification. The span at 603–620 (AKEKQVITKEDERGEGRP) shows a compositional bias: basic and acidic residues. The segment at 603 to 637 (AKEKQVITKEDERGEGRPRSIVSRRPSEGPQPLVR) is disordered. 5 positions are modified to phosphoserine: Ser629, Ser722, Ser728, Ser738, and Ser740. Basic and acidic residues predominate over residues 772–789 (KLQEDMKVKEHEDKDDAS). Disordered stretches follow at residues 772 to 808 (KLQE…VSMA) and 825 to 870 (LNSC…GKDP). Low complexity-rich tracts occupy residues 797–808 (STASQMSSVSMA) and 830–841 (TKSSTSSSQKTT). Positions 857 to 869 (QKREQSPSQHGKD) are enriched in basic and acidic residues. Residues 871 to 892 (ASLLASELVQLHMQLEEKRRAI) form a sufficient for interaction with SPTBN1 region. Coiled coils occupy residues 873–909 (LLAS…QRLK) and 1016–1048 (DVNE…QEQL). The sufficient for interaction with calmodulin stretch occupies residues 903–922 (SARQRLKLGKAAFLHVVKKG). 3 disordered regions span residues 1075-1165 (FVEP…GKCL), 1206-1226 (KEVG…VEEP), and 1301-1448 (ARVR…DWET). A Phosphoserine modification is found at Ser1080. Over residues 1103-1114 (RPAELKVPKDRP) the composition is skewed to basic and acidic residues. Polar residues predominate over residues 1115 to 1127 (QGSSRSKTPTPSV). Low complexity predominate over residues 1206-1220 (KEVGSSSSDVSGKES). Positions 1291 to 1343 (LLKQQRKAEEARVRKQQLEAEVELKRDEARRKAEEDRVRKEEEKARRELIKQE) form a coiled coil. The span at 1301–1346 (ARVRKQQLEAEVELKRDEARRKAEEDRVRKEEEKARRELIKQEYLR) shows a compositional bias: basic and acidic residues. Over residues 1361–1372 (PKSKPKKPRPKS) the composition is skewed to basic residues. Residues 1380-1392 (SDSGTKCSSTPDN) show a composition bias toward polar residues. Low complexity predominate over residues 1393–1410 (LSRTQSGSSLSLASAATT). Ser1398 and Ser1427 each carry phosphoserine. The 135-residue stretch at 1463–1597 (GPKLFKEPSS…QPKRPAVPKK (135 aa)) folds into the CKK domain. Tyr1537 is subject to Phosphotyrosine.

This sequence belongs to the CAMSAP1 family. As to quaternary structure, interacts with spectrin via SPTBN1; the interaction is direct. Interacts with calmodulin; calcium-dependent it prevents interaction with spectrin.

The protein resides in the cytoplasm. It localises to the cytoskeleton. Functionally, key microtubule-organizing protein that specifically binds the minus-end of non-centrosomal microtubules and regulates their dynamics and organization. Specifically recognizes growing microtubule minus-ends and stabilizes microtubules. Acts on free microtubule minus-ends that are not capped by microtubule-nucleating proteins or other factors and protects microtubule minus-ends from depolymerization. In contrast to CAMSAP2 and CAMSAP3, tracks along the growing tips of minus-end microtubules without significantly affecting the polymerization rate: binds at the very tip of the microtubules minus-end and acts as a minus-end tracking protein (-TIP) that dissociates from microtubules after allowing tubulin incorporation. Through interaction with spectrin may regulate neurite outgrowth. In Homo sapiens (Human), this protein is Calmodulin-regulated spectrin-associated protein 1 (CAMSAP1).